A 197-amino-acid chain; its full sequence is Ribonuclease HII (197 aa).

The RNase H type-2 domain maps to 11–197 (HLIAGVDEVG…FAPVKKILGL (187 aa)). 3 residues coordinate a divalent metal cation: D17, E18, and D109.

This sequence belongs to the RNase HII family. It depends on Mn(2+) as a cofactor. The cofactor is Mg(2+).

The protein resides in the cytoplasm. It catalyses the reaction Endonucleolytic cleavage to 5'-phosphomonoester.. Functionally, endonuclease that specifically degrades the RNA of RNA-DNA hybrids. The protein is Ribonuclease HII of Actinobacillus pleuropneumoniae serotype 5b (strain L20).